We begin with the raw amino-acid sequence, 266 residues long: Cytosolic Fe-S cluster assembly factor Nubp2 homolog (266 aa).

14 to 21 (GKGGVGKS) is an ATP binding site. Cys188 and Cys191 together coordinate [4Fe-4S] cluster.

This sequence belongs to the Mrp/NBP35 ATP-binding proteins family. Nubp2/CFD1 subfamily. In terms of assembly, heterotetramer of 2 Nubp1 and 2 Nubp2 chains. [4Fe-4S] cluster serves as cofactor.

The protein localises to the cytoplasm. In terms of biological role, component of the cytosolic iron-sulfur (Fe/S) protein assembly (CIA) machinery. Required for maturation of extramitochondrial Fe-S proteins. The Nubp1-Nubp2 heterotetramer forms a Fe-S scaffold complex, mediating the de novo assembly of an Fe-S cluster and its transfer to target apoproteins. This Drosophila virilis (Fruit fly) protein is Cytosolic Fe-S cluster assembly factor Nubp2 homolog.